The following is an 806-amino-acid chain: Acetyl-CoA decarbonylase/synthase complex subunit alpha 1 (806 aa).

Residues cysteine 73, cysteine 76, cysteine 77, cysteine 79, cysteine 84, and cysteine 94 each contribute to the [4Fe-4S] cluster site. Histidine 117 contributes to the CO binding site. The [Ni-4Fe-4S] cluster site is built by histidine 250, cysteine 278, and cysteine 323. 2 consecutive 4Fe-4S ferredoxin-type domains span residues 407–436 and 446–475; these read DEEFTNWVMKCADCGACMIACPEELDIPEA and SYLDILHDQCIGCRRCEQVCKKEIPILNII. The [4Fe-4S] cluster site is built by cysteine 417, cysteine 420, cysteine 423, cysteine 427, cysteine 455, cysteine 458, cysteine 461, and cysteine 465. Residues cysteine 523, cysteine 552, and cysteine 587 each contribute to the [Ni-4Fe-4S] cluster site.

The protein belongs to the Ni-containing carbon monoxide dehydrogenase family. As to quaternary structure, heterotetramer of two alpha and two epsilon subunits. The ACDS complex is made up of alpha, epsilon, beta, gamma and delta subunits with a probable stoichiometry of (alpha(2)epsilon(2))(4)-beta(8)-(gamma(1)delta(1))(8). Requires [4Fe-4S] cluster as cofactor. It depends on [Ni-4Fe-4S] cluster as a cofactor.

The enzyme catalyses CO + 2 oxidized [2Fe-2S]-[ferredoxin] + H2O = 2 reduced [2Fe-2S]-[ferredoxin] + CO2 + 2 H(+). Its pathway is one-carbon metabolism; methanogenesis from acetate. Its activity is regulated as follows. Carbon monoxide dehydrogenase activity is inhibited by KCN and is rapidly inactivated by O(2). Part of the ACDS complex that catalyzes the reversible cleavage of acetyl-CoA, allowing growth on acetate as sole source of carbon and energy. The alpha-epsilon subcomponent functions as a carbon monoxide dehydrogenase. This is Acetyl-CoA decarbonylase/synthase complex subunit alpha 1 from Methanosarcina barkeri (strain Fusaro / DSM 804).